The sequence spans 319 residues: Quinolinate synthase (319 aa).

Residues His-35 and Ser-52 each coordinate iminosuccinate. Cys-97 contacts [4Fe-4S] cluster. Residues 123–125 and Ser-140 contribute to the iminosuccinate site; that span reads YIN. Cys-183 lines the [4Fe-4S] cluster pocket. Residues 209–211 and Thr-226 each bind iminosuccinate; that span reads HPE. Cys-276 is a binding site for [4Fe-4S] cluster.

It belongs to the quinolinate synthase family. Type 2 subfamily. It depends on [4Fe-4S] cluster as a cofactor.

Its subcellular location is the cytoplasm. It carries out the reaction iminosuccinate + dihydroxyacetone phosphate = quinolinate + phosphate + 2 H2O + H(+). The protein operates within cofactor biosynthesis; NAD(+) biosynthesis; quinolinate from iminoaspartate: step 1/1. Catalyzes the condensation of iminoaspartate with dihydroxyacetone phosphate to form quinolinate. The sequence is that of Quinolinate synthase from Microcystis aeruginosa (strain NIES-843 / IAM M-2473).